Here is a 616-residue protein sequence, read N- to C-terminus: Dihydroxy-acid dehydratase (616 aa).

Aspartate 81 is a Mg(2+) binding site. Cysteine 122 lines the [2Fe-2S] cluster pocket. Mg(2+) contacts are provided by aspartate 123 and lysine 124. Lysine 124 carries the post-translational modification N6-carboxylysine. Cysteine 195 contacts [2Fe-2S] cluster. Glutamate 491 serves as a coordination point for Mg(2+). Serine 517 (proton acceptor) is an active-site residue.

It belongs to the IlvD/Edd family. As to quaternary structure, homodimer. Requires [2Fe-2S] cluster as cofactor. It depends on Mg(2+) as a cofactor.

The enzyme catalyses (2R)-2,3-dihydroxy-3-methylbutanoate = 3-methyl-2-oxobutanoate + H2O. It carries out the reaction (2R,3R)-2,3-dihydroxy-3-methylpentanoate = (S)-3-methyl-2-oxopentanoate + H2O. It functions in the pathway amino-acid biosynthesis; L-isoleucine biosynthesis; L-isoleucine from 2-oxobutanoate: step 3/4. Its pathway is amino-acid biosynthesis; L-valine biosynthesis; L-valine from pyruvate: step 3/4. Its function is as follows. Functions in the biosynthesis of branched-chain amino acids. Catalyzes the dehydration of (2R,3R)-2,3-dihydroxy-3-methylpentanoate (2,3-dihydroxy-3-methylvalerate) into 2-oxo-3-methylpentanoate (2-oxo-3-methylvalerate) and of (2R)-2,3-dihydroxy-3-methylbutanoate (2,3-dihydroxyisovalerate) into 2-oxo-3-methylbutanoate (2-oxoisovalerate), the penultimate precursor to L-isoleucine and L-valine, respectively. This chain is Dihydroxy-acid dehydratase, found in Salmonella agona (strain SL483).